Here is a 366-residue protein sequence, read N- to C-terminus: Ribosomal RNA large subunit methyltransferase M (366 aa).

S-adenosyl-L-methionine contacts are provided by residues serine 188, 221 to 224 (CPGG), aspartate 240, aspartate 260, and aspartate 277. The active-site Proton acceptor is the lysine 306.

This sequence belongs to the class I-like SAM-binding methyltransferase superfamily. RNA methyltransferase RlmE family. RlmM subfamily. Monomer.

It localises to the cytoplasm. It catalyses the reaction cytidine(2498) in 23S rRNA + S-adenosyl-L-methionine = 2'-O-methylcytidine(2498) in 23S rRNA + S-adenosyl-L-homocysteine + H(+). Functionally, catalyzes the 2'-O-methylation at nucleotide C2498 in 23S rRNA. The polypeptide is Ribosomal RNA large subunit methyltransferase M (Photorhabdus sp. (strain Az29)).